A 237-amino-acid polypeptide reads, in one-letter code: B3 domain-containing protein At1g20600 (237 aa).

The interval 53-79 (LVSQANQKQSRKREEKTEKNQPKRVKN) is disordered. Basic and acidic residues predominate over residues 64-73 (KREEKTEKNQ). The segment at residues 126–230 (KKQLMSSDVD…LEHVFIRGSK (105 aa)) is a DNA-binding region (TF-B3).

The protein resides in the nucleus. The polypeptide is B3 domain-containing protein At1g20600 (Arabidopsis thaliana (Mouse-ear cress)).